A 184-amino-acid chain; its full sequence is MREYKLVVLGSGGVGKSALTVQFVQGIFVEKYDPTIEDSYRKQVEVDCQPCMLEILDTAGTEQFTAMRDLYMKNGQGFALVYSITAQSTFNDLQDLREQILRVKDTEDVPMILVGNKCDLEDERVVGKEQGQNLARQWNNCAFLESSAKSKINVNEIFYDLVRQINRKAPVEKCKKKKSQCTLL.

10–17 (GSGGVGKS) contacts GTP. The Effector region motif lies at 32–40 (YDPTIEDSY). GTP contacts are provided by residues 57–61 (DTAGT) and 116–119 (NKCD). Cys-181 carries the cysteine methyl ester modification. A lipid anchor (S-geranylgeranyl cysteine) is attached at Cys-181. A propeptide spans 182–184 (TLL) (removed in mature form).

This sequence belongs to the small GTPase superfamily. Ras family.

Its subcellular location is the cell membrane. It carries out the reaction GTP + H2O = GDP + phosphate + H(+). This Diplobatis ommata (Ocellated electric ray) protein is Ras-related protein O-Krev.